The sequence spans 68 residues: Amphipathic peptide OcyC1 (68 aa).

A signal peptide spans 1-23 (MKAQLCILLIALVLFQTFSQSDA). F36 carries the phenylalanine amide modification. The propeptide occupies 38–68 (RRGLNDLDDLDELFDGEISQADVDFLNELMR).

This sequence belongs to the non-disulfide-bridged peptide (NDBP) superfamily. Short antimicrobial peptide (group 4) family. In terms of tissue distribution, expressed by the venom gland.

The protein localises to the secreted. It is found in the target cell membrane. In terms of biological role, antimicrobial peptide. Inhibits the growth of Gram-positive and Gram-negative bacteria. Shows antifungal activity with MIC values ranging from 12.5 to 25 uM. Also shows an inhibitory activity on C.albicans biofilms at high concentrations. Shows low cytotoxic activity and has weak hemolytic activity. This chain is Amphipathic peptide OcyC1, found in Opisthacanthus cayaporum (South American scorpion).